The primary structure comprises 191 residues: Cdc42 homolog (191 aa).

Gly-10–Thr-17 serves as a coordination point for GTP. The short motif at Tyr-32–Tyr-40 is the Effector region element. Residues Asp-57–Gln-61 and Thr-115–Asp-118 contribute to the GTP site. Cys-188 is modified (cysteine methyl ester). The S-geranylgeranyl cysteine moiety is linked to residue Cys-188. The propeptide at Lys-189 to Leu-191 is removed in mature form.

This sequence belongs to the small GTPase superfamily. Rho family. CDC42 subfamily.

It localises to the cell junction. The protein localises to the adherens junction. The protein resides in the cell membrane. It carries out the reaction GTP + H2O = GDP + phosphate + H(+). Functionally, regulates mbt kinase activity and is also required to recruit mbt to adherens junctions. Together with mbt, regulates photoreceptor cell morphogenesis. The sequence is that of Cdc42 homolog from Drosophila pseudoobscura pseudoobscura (Fruit fly).